The chain runs to 561 residues: Malto-oligosyltrehalose trehalohydrolase (561 aa).

253–258 contacts substrate; the sequence is RLDAVH. Asp-255 serves as the catalytic Nucleophile. Residue Glu-286 is the Proton donor of the active site. Substrate is bound by residues 311 to 315 and 379 to 384; these read DDFHH and HDQVGN.

Belongs to the glycosyl hydrolase 13 family. Homodimer.

Its subcellular location is the cytoplasm. It carries out the reaction hydrolysis of (1-&gt;4)-alpha-D-glucosidic linkage in 4-alpha-D-[(1-&gt;4)-alpha-D-glucanosyl]n trehalose to yield trehalose and (1-&gt;4)-alpha-D-glucan.. It functions in the pathway glycan biosynthesis; trehalose biosynthesis. The sequence is that of Malto-oligosyltrehalose trehalohydrolase (treZ) from Saccharolobus solfataricus (strain ATCC 35092 / DSM 1617 / JCM 11322 / P2) (Sulfolobus solfataricus).